We begin with the raw amino-acid sequence, 344 residues long: Protein RecA (344 aa).

Position 65 to 72 (65 to 72 (GPESSGKT)) interacts with ATP. Over residues 323–337 (ELREKFQPAEAPREA) the composition is skewed to basic and acidic residues. Residues 323 to 344 (ELREKFQPAEAPREAGDDEDKE) form a disordered region.

The protein belongs to the RecA family.

Its subcellular location is the cytoplasm. Its function is as follows. Can catalyze the hydrolysis of ATP in the presence of single-stranded DNA, the ATP-dependent uptake of single-stranded DNA by duplex DNA, and the ATP-dependent hybridization of homologous single-stranded DNAs. It interacts with LexA causing its activation and leading to its autocatalytic cleavage. The chain is Protein RecA from Xanthomonas axonopodis pv. citri (strain 306).